The following is a 481-amino-acid chain: Adenosylhomocysteinase (481 aa).

Residues T65, D140, and E200 each coordinate substrate. 201–203 contributes to the NAD(+) binding site; it reads TTT. K230 and D234 together coordinate substrate. NAD(+) contacts are provided by residues N235, 264–269, E287, N322, 343–345, and N393; these read GYGDVG and IGH.

The protein belongs to the adenosylhomocysteinase family. Requires NAD(+) as cofactor.

Its subcellular location is the cytoplasm. The catalysed reaction is S-adenosyl-L-homocysteine + H2O = L-homocysteine + adenosine. The protein operates within amino-acid biosynthesis; L-homocysteine biosynthesis; L-homocysteine from S-adenosyl-L-homocysteine: step 1/1. Its function is as follows. May play a key role in the regulation of the intracellular concentration of adenosylhomocysteine. This Polynucleobacter asymbioticus (strain DSM 18221 / CIP 109841 / QLW-P1DMWA-1) (Polynucleobacter necessarius subsp. asymbioticus) protein is Adenosylhomocysteinase.